A 475-amino-acid chain; its full sequence is Dihydrolipoyl dehydrogenase (475 aa).

Residues 37–46 (EQYYSLGGVC), Lys-55, and Ala-118 contribute to the FAD site. A disulfide bond links Cys-46 and Cys-51. NAD(+) contacts are provided by residues 183 to 187 (GGGII), Asp-206, Val-239, and 272 to 275 (AIGR). Residues Asp-315 and Ala-323 each contribute to the FAD site. His-447 functions as the Proton acceptor in the catalytic mechanism.

Belongs to the class-I pyridine nucleotide-disulfide oxidoreductase family. Homodimer. Requires FAD as cofactor.

It localises to the cytoplasm. The catalysed reaction is N(6)-[(R)-dihydrolipoyl]-L-lysyl-[protein] + NAD(+) = N(6)-[(R)-lipoyl]-L-lysyl-[protein] + NADH + H(+). Functionally, lipoamide dehydrogenase is a component of the alpha-ketoacid dehydrogenase complexes. This Buchnera aphidicola subsp. Baizongia pistaciae (strain Bp) protein is Dihydrolipoyl dehydrogenase (lpdA).